The chain runs to 191 residues: Cdc42 homolog (191 aa).

A GTP-binding site is contributed by 10-17 (GDGAVGKT). The Effector region signature appears at 32–40 (YVPTVFDNY). GTP contacts are provided by residues 57–61 (DTAGQ) and 115–118 (TQID). Cys188 carries the post-translational modification Cysteine methyl ester. Cys188 carries S-geranylgeranyl cysteine lipidation. Residues 189–191 (KFL) constitute a propeptide, removed in mature form.

This sequence belongs to the small GTPase superfamily. Rho family. CDC42 subfamily.

Its subcellular location is the cell junction. The protein resides in the adherens junction. It is found in the cell membrane. Regulates mbt kinase activity and is also required to recruit mbt to adherens junctions. Together with mbt, regulates photoreceptor cell morphogenesis. The polypeptide is Cdc42 homolog (Aedes aegypti (Yellowfever mosquito)).